A 198-amino-acid chain; its full sequence is Guanylate kinase (198 aa).

The residue at position 2 (G2) is an N-acetylglycine. Residues 4–186 (PRPVVLSGPS…AYWALKEALS (183 aa)) enclose the Guanylate kinase-like domain. Residue 14–19 (GAGKST) participates in ATP binding. 37–51 (SHTTRDPRPGEENGK) provides a ligand contact to substrate. Active-site residues include R44, R137, and R148. Position 171-172 (171-172 (ND)) interacts with ATP.

It belongs to the guanylate kinase family. As to quaternary structure, monomer. Interacts with RD3.

It is found in the photoreceptor inner segment. It localises to the cytoplasm. The protein localises to the cytosol. The catalysed reaction is GMP + ATP = GDP + ADP. Its activity is regulated as follows. Up-regulated by RD3. Functionally, catalyzes the phosphorylation of GMP to GDP. Essential enzyme for recycling GMP and indirectly, cyclic GMP (cGMP). Involved in the cGMP metabolism in photoreceptors. The polypeptide is Guanylate kinase (GUK1) (Sus scrofa (Pig)).